Here is a 343-residue protein sequence, read N- to C-terminus: MEKKKIVLKNFTEDELKEFMKTIDEKPFRGSQIFSWIYKGAKTFDDMNNIPKSLRNKLEEVSCIGHIDIELKLESKVDNTKKYLFLLDDGNIIETVMMDYDSRVTVCVSNQVGCRMGCNFCASTMDGLIRNLEPWEILDQVIKIQEDTGKRVSNLVLMGSGEPLDNFENTKQFLKIINEKNGLNIGYRHITLSTCGIVPKMYELADLEIAINLALSLHSPYDEERRKIMPVANAYSIEEILNACRYYIKKTNRRVTFEYSLIKGVNDSEKEAKALAKLLKGMLCHVNLIPINKVEEREYEKPDKAFIYKFRDSLEKNNIPATVRMSMGSDISGACGQLRRKYK.

The active-site Proton acceptor is Glu-94. The Radical SAM core domain occupies 100 to 330 (YDSRVTVCVS…ATVRMSMGSD (231 aa)). Cys-107 and Cys-335 are disulfide-bonded. [4Fe-4S] cluster is bound by residues Cys-114, Cys-118, and Cys-121. S-adenosyl-L-methionine is bound by residues 161 to 162 (GE), Ser-193, 216 to 218 (SLH), and Asn-292. Cys-335 (S-methylcysteine intermediate) is an active-site residue.

This sequence belongs to the radical SAM superfamily. RlmN family. [4Fe-4S] cluster serves as cofactor.

It is found in the cytoplasm. It carries out the reaction adenosine(2503) in 23S rRNA + 2 reduced [2Fe-2S]-[ferredoxin] + 2 S-adenosyl-L-methionine = 2-methyladenosine(2503) in 23S rRNA + 5'-deoxyadenosine + L-methionine + 2 oxidized [2Fe-2S]-[ferredoxin] + S-adenosyl-L-homocysteine. It catalyses the reaction adenosine(37) in tRNA + 2 reduced [2Fe-2S]-[ferredoxin] + 2 S-adenosyl-L-methionine = 2-methyladenosine(37) in tRNA + 5'-deoxyadenosine + L-methionine + 2 oxidized [2Fe-2S]-[ferredoxin] + S-adenosyl-L-homocysteine. Its function is as follows. Specifically methylates position 2 of adenine 2503 in 23S rRNA and position 2 of adenine 37 in tRNAs. In Clostridioides difficile (strain 630) (Peptoclostridium difficile), this protein is Probable dual-specificity RNA methyltransferase RlmN.